Reading from the N-terminus, the 345-residue chain is Probable deoxyhypusine synthase 2 (345 aa).

Catalysis depends on lysine 292, which acts as the Nucleophile.

Belongs to the deoxyhypusine synthase family. The cofactor is NAD(+).

It catalyses the reaction [eIF5A protein]-L-lysine + spermidine = [eIF5A protein]-deoxyhypusine + propane-1,3-diamine. It functions in the pathway protein modification; eIF5A hypusination. Catalyzes the NAD-dependent oxidative cleavage of spermidine and the subsequent transfer of the butylamine moiety of spermidine to the epsilon-amino group of a specific lysine residue of the eIF-5A precursor protein to form the intermediate deoxyhypusine residue. The sequence is that of Probable deoxyhypusine synthase 2 (dys2) from Methanosarcina mazei (strain ATCC BAA-159 / DSM 3647 / Goe1 / Go1 / JCM 11833 / OCM 88) (Methanosarcina frisia).